The chain runs to 226 residues: Ras-related protein Rab11A (226 aa).

GTP is bound by residues 24 to 32 (GDSAVGKSQ), 43 to 49 (SLDSKST), 72 to 76 (DTAGQ), 130 to 133 (NKCD), and 160 to 162 (SAL). Residues 46-54 (SKSTIGVEF) carry the Effector region motif. Residues Cys-222 and Cys-223 are each lipidated (S-geranylgeranyl cysteine). Cys-223 carries the cysteine methyl ester modification. Residues 224–226 (QAS) constitute a propeptide, removed in mature form.

It belongs to the small GTPase superfamily. Rab family.

Its subcellular location is the cell membrane. The polypeptide is Ras-related protein Rab11A (RAB11A) (Lotus japonicus (Lotus corniculatus var. japonicus)).